A 328-amino-acid polypeptide reads, in one-letter code: DNA-directed RNA polymerase subunit alpha (328 aa).

Residues 1 to 232 (MHNSLAELIK…QHLAILVDLK (232 aa)) are alpha N-terminal domain (alpha-NTD). The segment at 246 to 328 (FDPLLLHPVD…PPEGLKKLNQ (83 aa)) is alpha C-terminal domain (alpha-CTD).

It belongs to the RNA polymerase alpha chain family. As to quaternary structure, homodimer. The RNAP catalytic core consists of 2 alpha, 1 beta, 1 beta' and 1 omega subunit. When a sigma factor is associated with the core the holoenzyme is formed, which can initiate transcription.

It catalyses the reaction RNA(n) + a ribonucleoside 5'-triphosphate = RNA(n+1) + diphosphate. In terms of biological role, DNA-dependent RNA polymerase catalyzes the transcription of DNA into RNA using the four ribonucleoside triphosphates as substrates. This is DNA-directed RNA polymerase subunit alpha from Methylococcus capsulatus (strain ATCC 33009 / NCIMB 11132 / Bath).